A 397-amino-acid chain; its full sequence is Serpin B10 (397 aa).

The short motif at 74-77 (KKRK) is the Nuclear localization signal element.

The protein belongs to the serpin family. Ov-serpin subfamily. As to expression, expressed in many tissues, including brain, heart, kidney, liver, lung, prostate, skin, spleen and stomach.

It localises to the nucleus. It is found in the cytoplasm. In terms of biological role, protease inhibitor that may play a role in the regulation of protease activities during hematopoiesis and apoptosis induced by TNF. May regulate protease activities in the cytoplasm and in the nucleus. Inhibits plasmin. This Rattus norvegicus (Rat) protein is Serpin B10 (Serpinb10).